The following is a 78-amino-acid chain: Conotoxin 1 (78 aa).

Positions 1–22 (MKLTCMMFVAVLFLTASVFITA) are cleaved as a signal peptide. Residues 23–51 (DDSRNGIENLPRMRRHEMKNPKASKLNKR) constitute a propeptide that is removed on maturation. Gln-52 is modified (pyrrolidone carboxylic acid). 3 cysteine pairs are disulfide-bonded: Cys-53-Cys-69, Cys-60-Cys-73, and Cys-68-Cys-77.

Belongs to the conotoxin O1 superfamily. In terms of tissue distribution, expressed by the venom duct.

It localises to the secreted. The sequence is that of Conotoxin 1 from Conus imperialis (Imperial cone).